We begin with the raw amino-acid sequence, 227 residues long: MFS-type transporter FVEG_08288 (227 aa).

Residues 8–28 (VFLTVLIAIASCSVYILNIAI) form a helical membrane-spanning segment. N-linked (GlcNAc...) asparagine glycosylation is present at Asn40. The next 5 membrane-spanning stretches (helical) occupy residues 43-63 (TVGLAYMSTGIGYILSSMAGG), 100-120 (VANTLYPLSSLWFGWTMYYGV), 122-142 (FMVPISALFVFGFTLMLHFTL), 164-181 (FVRNILSCVGTIVAAPWM), and 188-208 (YMMTKLCIICLLLGSLGIWLI).

The protein belongs to the major facilitator superfamily.

The protein localises to the membrane. In terms of biological role, MFS-type transporter; part of the Fusarium detoxification of benzoxazolinone cluster 1 (FDB1) involved in the degradation of benzoxazolinones produced by the host plant. Maize, wheat, and rye produce the 2 benzoxazinone phytoanticipins 2,4-dihy-droxy-7-methoxy-1,4-benzoxazin-3-one (DIMBOA) and 2,4-dihydroxy-1,4-benzoxazin-3-one (DIBOA) that, due to their inherent instability once released, spontaneously degrade to the more stable corresponding benzoxazolinones, 6-methoxy-2-benzoxazolinone (MBOA) and 2-benzoxazolinone (BOA), respectively. The sequence is that of MFS-type transporter FVEG_08288 from Gibberella moniliformis (strain M3125 / FGSC 7600) (Maize ear and stalk rot fungus).